Here is a 433-residue protein sequence, read N- to C-terminus: 3-phosphoshikimate 1-carboxyvinyltransferase (433 aa).

3-phosphoshikimate-binding residues include lysine 15, serine 16, and arginine 20. Residue lysine 15 coordinates phosphoenolpyruvate. The phosphoenolpyruvate site is built by glycine 96 and arginine 124. Positions 169, 171, 195, 318, and 345 each coordinate 3-phosphoshikimate. Glutamine 171 serves as a coordination point for phosphoenolpyruvate. The Proton acceptor role is filled by aspartate 318. Residues arginine 349 and arginine 393 each contribute to the phosphoenolpyruvate site.

This sequence belongs to the EPSP synthase family. As to quaternary structure, monomer.

It localises to the cytoplasm. It carries out the reaction 3-phosphoshikimate + phosphoenolpyruvate = 5-O-(1-carboxyvinyl)-3-phosphoshikimate + phosphate. The protein operates within metabolic intermediate biosynthesis; chorismate biosynthesis; chorismate from D-erythrose 4-phosphate and phosphoenolpyruvate: step 6/7. Its function is as follows. Catalyzes the transfer of the enolpyruvyl moiety of phosphoenolpyruvate (PEP) to the 5-hydroxyl of shikimate-3-phosphate (S3P) to produce enolpyruvyl shikimate-3-phosphate and inorganic phosphate. The protein is 3-phosphoshikimate 1-carboxyvinyltransferase of Chlorobium luteolum (strain DSM 273 / BCRC 81028 / 2530) (Pelodictyon luteolum).